The chain runs to 341 residues: MAALGHTLPFYTGTKPTFPMDTTLAVIITIFLTALVTFIIILPGIRGKTRLFWLLRVVTSLFIGAVILAVNFSSEWSVGHVNANTTYKAFSPKWVSVDVGLQIGLGGVNITLTGTPVQQLNETINYNEAFAWRLGRSYAEEYAKALEKGLPDPVLYLAEKFTPRSPCGLYNQYRLAGHYASAMLWVAFLCWLLANVMLSMPVLVYGGHMLLATGLFQLLALFFFSMTTSLISPCPLRLGTAVLHTHHGPAFWITLATGLLCILLGLVMAVAHRMQPHRLKAFFNQSSEDPVLEWGSEEGGLLSPHYRSIAESPETQDIPMSVASSETCFKEEHPKESDCSL.

Residues 1–24 (MAALGHTLPFYTGTKPTFPMDTTL) lie on the Extracellular side of the membrane. Residues 25–45 (AVIITIFLTALVTFIIILPGI) traverse the membrane as a helical segment. Residues 46–51 (RGKTRL) are Cytoplasmic-facing. The helical transmembrane segment at 52–72 (FWLLRVVTSLFIGAVILAVNF) threads the bilayer. Over 73-183 (SSEWSVGHVN…RLAGHYASAM (111 aa)) the chain is Extracellular. N-linked (GlcNAc...) asparagine glycosylation is found at N84, N109, and N121. The helical transmembrane segment at 184–204 (LWVAFLCWLLANVMLSMPVLV) threads the bilayer. Y205 is a topological domain (cytoplasmic). Residues 206 to 226 (GGHMLLATGLFQLLALFFFSM) traverse the membrane as a helical segment. The Extracellular portion of the chain corresponds to 227-249 (TTSLISPCPLRLGTAVLHTHHGP). The helical transmembrane segment at 250–270 (AFWITLATGLLCILLGLVMAV) threads the bilayer. Over 271–341 (AHRMQPHRLK…EHPKESDCSL (71 aa)) the chain is Cytoplasmic.

The protein belongs to the DUOXA family. In terms of assembly, may interact with NUMB.

It localises to the membrane. Its function is as follows. May be required for the maturation and the transport from the endoplasmic reticulum to the plasma membrane of functional DUOX1. This chain is Dual oxidase maturation factor 1 (Duoxa1), found in Mus musculus (Mouse).